A 201-amino-acid chain; its full sequence is Small ribosomal subunit protein uS4c (201 aa).

The interval A17–F36 is disordered. Positions M89–P157 constitute an S4 RNA-binding domain.

The protein belongs to the universal ribosomal protein uS4 family. In terms of assembly, part of the 30S ribosomal subunit. Contacts protein S5. The interaction surface between S4 and S5 is involved in control of translational fidelity.

It localises to the plastid. Its subcellular location is the chloroplast. In terms of biological role, one of the primary rRNA binding proteins, it binds directly to 16S rRNA where it nucleates assembly of the body of the 30S subunit. Functionally, with S5 and S12 plays an important role in translational accuracy. The protein is Small ribosomal subunit protein uS4c (rps4) of Agrostis stolonifera (Creeping bentgrass).